Consider the following 155-residue polypeptide: Ribosomal RNA large subunit methyltransferase H (155 aa).

Residues Leu-73, Gly-104, and 123–128 (LSPLTL) contribute to the S-adenosyl-L-methionine site.

Belongs to the RNA methyltransferase RlmH family. As to quaternary structure, homodimer.

It localises to the cytoplasm. It catalyses the reaction pseudouridine(1915) in 23S rRNA + S-adenosyl-L-methionine = N(3)-methylpseudouridine(1915) in 23S rRNA + S-adenosyl-L-homocysteine + H(+). Specifically methylates the pseudouridine at position 1915 (m3Psi1915) in 23S rRNA. The sequence is that of Ribosomal RNA large subunit methyltransferase H from Pseudomonas putida (strain ATCC 700007 / DSM 6899 / JCM 31910 / BCRC 17059 / LMG 24140 / F1).